The chain runs to 460 residues: MSRSLDSARSFLERLEARGGREGAVLAGEFSDIQACSAAWKADGVCSTVAGSRPENVRKNRYKDVLPYDQTRVILSLLQEEGHSDYINGNFIRGVDGSLAYIATQGPLPHTLLDFWRLVWEFGVKVILMACREIENGRKRCERYWAQEQEPLQTGLFCITLIKEKWLNEDIMLRTLKVTFQKESRSVYQLQYMSWPDRGVPSSPDHMLAMVEEARRLQGSGPEPLCVHCSAGCGRTGVLCTVDYVRQLLLTQMIPPDFSLFDVVLKMRKQRPAAVQTEEQYRFLYHTVAQMFCSTLQNASPHYQNIKENCAPLYDDALFLRTPQALLAIPRPPGGVLRSISVPGSPGHAMADTYAVVQKRGAPAGAGSGTQTGTGTGTGARSAEEAPLYSKVTPRAQRPGAHAEDARGTLPGRVPADQSPAGSGAYEDVAGGAQTGGLGFNLRIGRPKGPRDPPAEWTRV.

A Tyrosine-protein phosphatase domain is found at 26–291; the sequence is LAGEFSDIQA…RFLYHTVAQM (266 aa). Residues aspartate 197, 229–235, and glutamine 276 each bind substrate; that span reads CSAGCGR. Cysteine 229 acts as the Phosphocysteine intermediate in catalysis. The segment at 361–460 is disordered; that stretch reads GAPAGAGSGT…RDPPAEWTRV (100 aa). Positions 364 to 378 are enriched in gly residues; it reads AGAGSGTQTGTGTGT. Tyrosine 389 is subject to Phosphotyrosine. Residue threonine 393 is modified to Phosphothreonine. Tyrosine 426 is modified (phosphotyrosine). Residues 449–460 are compositionally biased toward basic and acidic residues; that stretch reads GPRDPPAEWTRV.

Belongs to the protein-tyrosine phosphatase family. Non-receptor class 4 subfamily. Interacts with PSTPIP1. In terms of tissue distribution, expressed in brain, colon and several tumor-derived cell lines.

Its subcellular location is the nucleus. The protein localises to the cytoplasm. It catalyses the reaction O-phospho-L-tyrosyl-[protein] + H2O = L-tyrosyl-[protein] + phosphate. In terms of biological role, differentially dephosphorylate autophosphorylated tyrosine kinases which are known to be overexpressed in tumor tissues. This is Tyrosine-protein phosphatase non-receptor type 18 (PTPN18) from Homo sapiens (Human).